Consider the following 182-residue polypeptide: AVLALCATDTLANEDCFRHESLVPNLDYERFRGSWIIAAGTSEALTQYKCWIDRFSYDDALVSKYTDSQGKNRTTIRGRTKFEGNKFTIDYNDKGKAFSAPYSVLATDYENYAIVEGCPAAANGHVIYVQIRFSVRRFHPKLGDKEMIQHYTLDQVNQHKKAIEEDLKHFNLKYEDLHSTCH.

A signal peptide spans 1 to 12 (AVLALCATDTLA). Asparagine 72 carries an N-linked (GlcNAc...) asparagine glycan.

It belongs to the calycin superfamily. Triabin family.

Its subcellular location is the secreted. Functionally, probable ligand-binding protein. This chain is Allergen Bla g 4, found in Blattella germanica (German cockroach).